A 105-amino-acid polypeptide reads, in one-letter code: Large ribosomal subunit protein bL21 (105 aa).

This sequence belongs to the bacterial ribosomal protein bL21 family. Part of the 50S ribosomal subunit. Contacts protein L20.

Its function is as follows. This protein binds to 23S rRNA in the presence of protein L20. In Phocaeicola vulgatus (strain ATCC 8482 / DSM 1447 / JCM 5826 / CCUG 4940 / NBRC 14291 / NCTC 11154) (Bacteroides vulgatus), this protein is Large ribosomal subunit protein bL21.